The sequence spans 208 residues: Kinetochore protein Spc25 (208 aa).

A coiled-coil region spans residues 31-101; the sequence is SKIAAKHQLI…KKQRRDELMG (71 aa).

It belongs to the SPC25 family. In terms of assembly, component of the Ndc80 complex, which is composed of Ndc80, Nuf2 and Spc25.

It is found in the nucleus. The protein localises to the chromosome. The protein resides in the centromere. It localises to the kinetochore. Functionally, acts as a component of the essential kinetochore-associated Ndc80 complex, which is required for chromosome segregation and spindle checkpoint activity during meiosis and mitosis. Required for kinetochore integrity and the organization of stable microtubule binding sites in the outer plate of the kinetochore. Participates in SAC signaling that responds specifically to disruptions in spindle microtubule dynamics. The NDC80 complex synergistically enhances the affinity of the SKA1 complex for microtubules and may allow the NDC80 complex to track depolymerizing microtubules. The sequence is that of Kinetochore protein Spc25 from Drosophila mojavensis (Fruit fly).